The primary structure comprises 290 residues: UPF0750 membrane protein YdeO (290 aa).

5 helical membrane-spanning segments follow: residues 18–38 (IIMV…VLIP), 56–76 (LFNL…VWLG), 83–103 (SFAL…SFFH), 112–132 (DTLL…GLAL), and 165–185 (LFVF…LSVI).

This sequence belongs to the UPF0750 family.

Its subcellular location is the cell membrane. The sequence is that of UPF0750 membrane protein YdeO (ydeO) from Bacillus subtilis (strain 168).